The primary structure comprises 22 residues: Ocellatin-LB1 (22 aa).

A Methionine amide modification is found at Met22.

Expressed by the skin glands.

The protein resides in the secreted. In terms of biological role, antibacterial peptide that inhibits Gram-negative bacteria A.actinomycetemcomitans ATCC 29522 (MIC=222.37 uM) and E.coli ATCC 25922 (MIC=114.04 uM). Also has antifungal activity against C.albicans ATCC 18804 (MIC=233.55 uM) and C.lusitaniae ATCC 56936 (MIC=233.55 uM). No activity against the Gram-positive bacterium S.aureus ATCC 25923. Shows virtually no hemolytic activity towards rabbit erythrocytes. The polypeptide is Ocellatin-LB1 (Leptodactylus labyrinthicus (Labyrinth frog)).